Consider the following 400-residue polypeptide: Sensor histidine kinase LnrJ (400 aa).

Topologically, residues 1–2 are extracellular; it reads MK. The chain crosses the membrane as a helical span at residues 3–23; it reads ALFFTRMFTLMVSCLMYLSIV. Residues 24–27 are Cytoplasmic-facing; sequence KEDN. Residues 28–48 form a helical membrane-spanning segment; the sequence is WFGYVFIAAGAAMYAANHVLL. The Extracellular portion of the chain corresponds to 49–61; the sequence is TKETNAIWFCLID. A helical transmembrane segment spans residues 62–82; the sequence is IAIGFSFGFIFPGTGLFIIML. The Cytoplasmic segment spans residues 83 to 101; the sequence is CPVAVAFFLRGFPKRTAWS. Residues 102 to 122 form a helical membrane-spanning segment; sequence VLCLSSILFLTVLIRTYAMFG. Residues 123–125 lie on the Extracellular side of the membrane; sequence NEF. The chain crosses the membrane as a helical span at residues 126 to 146; that stretch reads VIDHLTSMTFVVFCGVVGKLI. The Cytoplasmic segment spans residues 147 to 400; the sequence is RKLLDAQDTA…GPVQQKESLS (254 aa). The region spanning 190–385 is the Histidine kinase domain; sequence IYERNRMARE…TVNAEFSLAN (196 aa). Phosphohistidine; by autocatalysis is present on His-201.

In terms of processing, autophosphorylated.

Its subcellular location is the cell membrane. It catalyses the reaction ATP + protein L-histidine = ADP + protein N-phospho-L-histidine.. In terms of biological role, required for resistance to linearmycins, a family of antibiotic-specialized metabolites produced by some streptomycetes. Member of the two-component regulatory system LnrJ/LnrK, which induces expression of the LnrLMN ABC transporter in response to linearmycins and other polyenes. Acts as a specific sensor for linearmycin, either directly through binding or indirectly through membrane perturbation. Probably activates LnrK by phosphorylation. May also promote biofilm formation. This chain is Sensor histidine kinase LnrJ, found in Bacillus subtilis (strain 168).